The following is a 314-amino-acid chain: DNA-directed RNA polymerase subunit alpha (314 aa).

The segment at 1–227 (MIEFQKPTIS…EHLALFIDLS (227 aa)) is alpha N-terminal domain (alpha-NTD). Residues 241-314 (VETVMENKEP…GQSFKQETEN (74 aa)) are alpha C-terminal domain (alpha-CTD).

The protein belongs to the RNA polymerase alpha chain family. Homodimer. The RNAP catalytic core consists of 2 alpha, 1 beta, 1 beta' and 1 omega subunit. When a sigma factor is associated with the core the holoenzyme is formed, which can initiate transcription.

It carries out the reaction RNA(n) + a ribonucleoside 5'-triphosphate = RNA(n+1) + diphosphate. In terms of biological role, DNA-dependent RNA polymerase catalyzes the transcription of DNA into RNA using the four ribonucleoside triphosphates as substrates. The protein is DNA-directed RNA polymerase subunit alpha of Oenococcus oeni (strain ATCC BAA-331 / PSU-1).